The following is a 273-amino-acid chain: 3-methyl-2-oxobutanoate hydroxymethyltransferase 1 (273 aa).

The Mg(2+) site is built by Asp-49 and Asp-88. 3-methyl-2-oxobutanoate-binding positions include 49 to 50, Asp-88, and Lys-118; that span reads DS. Glu-120 provides a ligand contact to Mg(2+). Glu-187 acts as the Proton acceptor in catalysis.

The protein belongs to the PanB family. Homodecamer; pentamer of dimers. Mg(2+) is required as a cofactor.

It localises to the cytoplasm. The catalysed reaction is 3-methyl-2-oxobutanoate + (6R)-5,10-methylene-5,6,7,8-tetrahydrofolate + H2O = 2-dehydropantoate + (6S)-5,6,7,8-tetrahydrofolate. The protein operates within cofactor biosynthesis; (R)-pantothenate biosynthesis; (R)-pantoate from 3-methyl-2-oxobutanoate: step 1/2. Its function is as follows. Catalyzes the reversible reaction in which hydroxymethyl group from 5,10-methylenetetrahydrofolate is transferred onto alpha-ketoisovalerate to form ketopantoate. The sequence is that of 3-methyl-2-oxobutanoate hydroxymethyltransferase 1 from Pseudomonas aeruginosa (strain UCBPP-PA14).